The following is a 74-amino-acid chain: Peptide BmKb2 (74 aa).

Residues 1 to 22 (MEIKYLLTVFLVLLIVSDHCQA) form the signal peptide. Lys40 is modified (lysine amide). The propeptide occupies 46-74 (DLNGQIDHFKNFRKRDAELEELLSKLPIY).

It belongs to the non-disulfide-bridged peptide (NDBP) superfamily. Short antimicrobial peptide (group 4) family.

It is found in the secreted. The protein resides in the target cell membrane. In terms of biological role, antibacterial peptide. This peptide gene is up-regulated at the transcriptional level after the venom gland is challenged by Gram-positive bacteria. This chain is Peptide BmKb2, found in Olivierus martensii (Manchurian scorpion).